Consider the following 251-residue polypeptide: Triosephosphate isomerase 1 (251 aa).

9–11 (NWK) contacts substrate. H95 functions as the Electrophile in the catalytic mechanism. The active-site Proton acceptor is E167. Substrate contacts are provided by residues G173, S213, and 234–235 (GG).

Belongs to the triosephosphate isomerase family. Homodimer.

Its subcellular location is the cytoplasm. The catalysed reaction is D-glyceraldehyde 3-phosphate = dihydroxyacetone phosphate. Its pathway is carbohydrate biosynthesis; gluconeogenesis. The protein operates within carbohydrate degradation; glycolysis; D-glyceraldehyde 3-phosphate from glycerone phosphate: step 1/1. In terms of biological role, involved in the gluconeogenesis. Catalyzes stereospecifically the conversion of dihydroxyacetone phosphate (DHAP) to D-glyceraldehyde-3-phosphate (G3P). The chain is Triosephosphate isomerase 1 from Listeria innocua serovar 6a (strain ATCC BAA-680 / CLIP 11262).